The chain runs to 136 residues: 5-hydroxyisourate hydrolase (136 aa).

The signal sequence occupies residues 1–22 (MKRHILATVIASLVAAPAMALA). Substrate is bound by residues H31, R69, and Y133.

This sequence belongs to the transthyretin family. 5-hydroxyisourate hydrolase subfamily. In terms of assembly, homotetramer.

The protein resides in the periplasm. It carries out the reaction 5-hydroxyisourate + H2O = 5-hydroxy-2-oxo-4-ureido-2,5-dihydro-1H-imidazole-5-carboxylate + H(+). Its function is as follows. Catalyzes the hydrolysis of 5-hydroxyisourate (HIU) to 2-oxo-4-hydroxy-4-carboxy-5-ureidoimidazoline (OHCU). The protein is 5-hydroxyisourate hydrolase (hiuH) of Salmonella dublin.